Reading from the N-terminus, the 353-residue chain is Aliphatic aldoxime dehydratase (353 aa).

Serine 219 contributes to the an aliphatic aldoxime binding site. Histidine 299 contributes to the heme b binding site. Histidine 320 contacts an aliphatic aldoxime. Residue histidine 320 is part of the active site.

The protein belongs to the heme-containing dehydratase family. In terms of assembly, homodimer. Heme b serves as cofactor.

It carries out the reaction an aliphatic aldoxime = a nitrile + H2O. Its activity is regulated as follows. Active when the heme iron is in the ferrous state. Activated by FMN, Fe(2+), Sn(2+), Na(2)SO(3), Na(2)S and vitamin K3. In terms of biological role, catalyzes the dehydration of aldoximes to their corresponding nitrile. Is active toward various arylalkyl- and alkyl-aldoximes, and to a lesser extent toward aryl-aldoximes. The chain is Aliphatic aldoxime dehydratase from Rhodococcus globerulus.